A 565-amino-acid chain; its full sequence is MAVASSPEKDQPLLQLQKVDSSRVGGQVLSPTLSSSLETSQPICITSPYTDLGHDFPTIPFYSPTIFSYAGPSISDCTSVHQSLNPSLFWPSRGHMGSPIPLHHSQHGQPIQSPWVEISPLDNVLKTKQDGASLPLAVVPVRHKSARRRSQESEEAVVTSGGKTDLHYCAVCHDYASGYHYGVWSCEGCKAFFKRSIQRDNEYICPATNECTIDKNRRKSCQACRLRKCYEVGMTKCGMRKERGNYRSPQMRRMTRLTSQGRTDSSSVLTGSAVVSLNAPQPSALTSEQLIERLMEAEPPEIYLMKDMKKPLTEAKVMMSLTNLADKELVHMITWAKKIPGFVELGLLDQVHLLECCWLEVLMVGLMWRSVDHPGKLVFSPDLSLSREEGSCVQGFAEIFDMLLAATSRVRELKLQREEYVCLKAMILLNSNMCLSSSESSSKLLRLLDAVTDALVSAIGKTVLSFRQQYTRLAHLLMLLSHIRHVSNKGMDHLHCMKMKNMVPLYDLLLEMLDAHIMHSSRLPRRSPEQEPEDQADAPAPPHSSGSGPSYTWTPSSSEGAGEPQ.

Positions 1–168 (MAVASSPEKD…TSGGKTDLHY (168 aa)) are modulating. NR C4-type zinc fingers lie at residues 169-189 (CAVC…CEGC) and 205-229 (CPAT…LRKC). The nuclear receptor DNA-binding region spans 169 to 234 (CAVCHDYASG…RLRKCYEVGM (66 aa)). A hinge region spans residues 235-285 (TKCGMRKERGNYRSPQMRRMTRLTSQGRTDSSSVLTGSAVVSLNAPQPSAL). In terms of domain architecture, NR LBD spans 286–516 (TSEQLIERLM…DLLLEMLDAH (231 aa)). Positions 522–565 (RLPRRSPEQEPEDQADAPAPPHSSGSGPSYTWTPSSSEGAGEPQ) are disordered.

The protein belongs to the nuclear hormone receptor family. NR3 subfamily. Homodimer. In terms of tissue distribution, abundant in the ovary and testes, barely detectable in the brain and muscle and undetectable in the liver.

The protein localises to the nucleus. Functionally, the steroid hormones and their receptors are involved in the regulation of eukaryotic gene expression and affect cellular proliferation and differentiation in target tissues. This Micropogonias undulatus (Atlantic croaker) protein is Estrogen receptor gamma (esr3).